The sequence spans 380 residues: Cytochrome b (380 aa).

Transmembrane regions (helical) follow at residues 34-54, 78-99, 114-134, and 179-199; these read FGSL…FLAM, WLLR…YCHI, WNVG…GYVL, and FFAF…IDLV. Residues His-84 and His-98 each coordinate heme b. Heme b is bound at residue His-183. His-202 serves as a coordination point for a ubiquinone. A run of 4 helical transmembrane segments spans residues 227-247, 289-309, 321-341, and 348-369; these read TKDT…ALLF, LGGV…PLLN, LSQA…WIGS, and FVLI…GFPL.

Belongs to the cytochrome b family. In terms of assembly, the main subunits of complex b-c1 are: cytochrome b, cytochrome c1 and the Rieske protein. Heme b serves as cofactor.

Its subcellular location is the mitochondrion inner membrane. Functionally, component of the ubiquinol-cytochrome c reductase complex (complex III or cytochrome b-c1 complex) that is part of the mitochondrial respiratory chain. The b-c1 complex mediates electron transfer from ubiquinol to cytochrome c. Contributes to the generation of a proton gradient across the mitochondrial membrane that is then used for ATP synthesis. The polypeptide is Cytochrome b (MT-CYB) (Paracentrotus lividus (Common sea urchin)).